The following is a 332-amino-acid chain: D-lactate dehydrogenase (332 aa).

Residues 155-156 (RI), Asp-175, 206-207 (VP), Asn-212, and 233-235 (FAR) contribute to the NAD(+) site. Catalysis depends on residues Arg-235 and Glu-264. The active-site Proton donor is His-296.

The protein belongs to the D-isomer specific 2-hydroxyacid dehydrogenase family. As to quaternary structure, homodimer.

It catalyses the reaction (R)-lactate + NAD(+) = pyruvate + NADH + H(+). The chain is D-lactate dehydrogenase from Lactiplantibacillus pentosus (Lactobacillus pentosus).